Here is a 299-residue protein sequence, read N- to C-terminus: MEYFELMFKTAKELEESIVAILEDVDSIGIAIEDNFFDESILWDYIDKSFSERNYILIKAYFDRNVDIDRIIDKIRTKIKEIFGEAKVEIEYRIIREEDWTNKWKKYAKPIYLDRIVVLPSWEEIGNVEDRILIRIDPGMAFGTGNHPTTIMCIEMLQKYLKEGMDVLDVGTGSGILSIVAKKLGGDKVKGVDIDEKAIEVAKKNAEGNHVEVEFQKNDLIDGINEKYDIVVANLIAEIILKLNANVKRVLKTDGIYIVSGIVQEKLDMILNSLRESGFKLLEVKEKEDWYTVVAQNED.

Positions 150, 171, 193, and 234 each coordinate S-adenosyl-L-methionine.

This sequence belongs to the methyltransferase superfamily. PrmA family.

The protein localises to the cytoplasm. The enzyme catalyses L-lysyl-[protein] + 3 S-adenosyl-L-methionine = N(6),N(6),N(6)-trimethyl-L-lysyl-[protein] + 3 S-adenosyl-L-homocysteine + 3 H(+). In terms of biological role, methylates ribosomal protein L11. The chain is Ribosomal protein L11 methyltransferase from Dictyoglomus turgidum (strain DSM 6724 / Z-1310).